A 360-amino-acid chain; its full sequence is Protein Wnt-2 (360 aa).

The first 25 residues, 1-25 (MNAPLGGIWLWLPLLLTWLTPEVNS), serve as a signal peptide directing secretion. 11 cysteine pairs are disulfide-bonded: Cys76–Cys87, Cys127–Cys135, Cys137–Cys157, Cys206–Cys220, Cys208–Cys215, Cys278–Cys309, Cys294–Cys304, Cys308–Cys348, Cys324–Cys339, Cys326–Cys336, and Cys331–Cys332. Ser212 carries the O-palmitoleoyl serine; by PORCN lipid modification. The N-linked (GlcNAc...) asparagine glycan is linked to Asn295.

It belongs to the Wnt family. Palmitoleoylation is required for efficient binding to frizzled receptors. Depalmitoleoylation leads to Wnt signaling pathway inhibition.

It localises to the secreted. The protein localises to the extracellular space. It is found in the extracellular matrix. Functionally, ligand for members of the frizzled family of seven transmembrane receptors. Functions in the canonical Wnt signaling pathway that results in activation of transcription factors of the TCF/LEF family. Functions as a upstream regulator of FGF10 expression. Plays an important role in embryonic lung development. May contribute to embryonic brain development by regulating the proliferation of dopaminergic precursors and neurons. This chain is Protein Wnt-2 (WNT2), found in Gorilla gorilla gorilla (Western lowland gorilla).